Consider the following 378-residue polypeptide: Probable 3-hydroxyisobutyryl-CoA hydrolase 2 (378 aa).

Residues Gly115, Glu138, and Asp146 each contribute to the substrate site. A Microbody targeting signal motif is present at residues 376–378; the sequence is AKL.

This sequence belongs to the enoyl-CoA hydratase/isomerase family.

It is found in the peroxisome. It catalyses the reaction 3-hydroxy-2-methylpropanoyl-CoA + H2O = 3-hydroxy-2-methylpropanoate + CoA + H(+). It participates in amino-acid degradation; L-valine degradation. In terms of biological role, involved in valine catabolism. The protein is Probable 3-hydroxyisobutyryl-CoA hydrolase 2 of Arabidopsis thaliana (Mouse-ear cress).